Here is a 333-residue protein sequence, read N- to C-terminus: Phenylalanine--tRNA ligase alpha subunit (333 aa).

Glu258 is a Mg(2+) binding site.

The protein belongs to the class-II aminoacyl-tRNA synthetase family. Phe-tRNA synthetase alpha subunit type 1 subfamily. As to quaternary structure, tetramer of two alpha and two beta subunits. Mg(2+) serves as cofactor.

The protein localises to the cytoplasm. The catalysed reaction is tRNA(Phe) + L-phenylalanine + ATP = L-phenylalanyl-tRNA(Phe) + AMP + diphosphate + H(+). This is Phenylalanine--tRNA ligase alpha subunit from Wigglesworthia glossinidia brevipalpis.